The sequence spans 2731 residues: Teneurin-1 (2731 aa).

Residues 1–72 are disordered; that stretch reads MEQTDCKPYQ…KRKDVEKSTQ (72 aa). The region spanning 1-318 is the Teneurin N-terminal domain; it reads MEQTDCKPYQ…KPYRCCNWKC (318 aa). Residues 1-324 are Cytoplasmic-facing; that stretch reads MEQTDCKPYQ…NWKCTALSAT (324 aa). Residues 44–55 show a composition bias toward basic and acidic residues; sequence ETLHEYNQELRR. A Nuclear localization signal (NLS) motif is present at residues 62-65; the sequence is RKRK. Ser105 bears the Phosphoserine mark. Thr109 is subject to Phosphothreonine. Position 116 is a phosphoserine (Ser116). The tract at residues 175-241 is disordered; it reads DSAQDMQSSP…PAPPTSTQDS (67 aa). The segment covering 178-189 has biased composition (polar residues); it reads QDMQSSPHNQFT. The segment covering 192–201 has biased composition (pro residues); sequence PLPPPPPPPH. The span at 214-224 shows a compositional bias: polar residues; it reads DSLQRRSMTTR. A Required for interaction with SORBS1 (Ten-1 ICD form) motif is present at residues 290–297; sequence PPPRPLPR. Residues 325 to 345 traverse the membrane as a helical segment; that stretch reads AITVTLALLLAYVIAVHLFGL. Residues 346 to 2731 are Extracellular-facing; sequence TWQLQPVGQI…FMRQSEIGRR (2386 aa). An N-linked (GlcNAc...) asparagine glycan is attached at Asn432. EGF-like domains are found at residues 527–558, 559–590, 591–623, 624–656, 657–690, 691–720, 721–752, and 760–795; these read IMDD…PDCA, RDSC…ECDV, PEEQ…EICE, EEDC…NCET, PLPI…SDCS, TELC…GPTC, EERS…DHCT, and VRDG…TGCN. 22 disulfides stabilise this stretch: Cys531–Cys541, Cys535–Cys546, Cys548–Cys557, Cys566–Cys577, Cys579–Cys588, Cys595–Cys606, Cys600–Cys611, Cys613–Cys622, Cys627–Cys638, Cys632–Cys643, Cys645–Cys654, Cys665–Cys678, Cys680–Cys689, Cys694–Cys704, Cys698–Cys709, Cys711–Cys720, Cys725–Cys735, Cys729–Cys740, Cys742–Cys751, Cys764–Cys774, Cys768–Cys783, and Cys785–Cys794. Asn904 and Asn1083 each carry an N-linked (GlcNAc...) asparagine glycan. NHL repeat units lie at residues 1193-1218, 1298-1342, 1357-1408, 1420-1464, and 1487-1530; these read LFAP…VRRI, SHCG…NAVI, LSCD…IAGR, FLVS…VTTN, and CFSG…ISKN. A YD 1 repeat occupies 1540–1559; sequence YEIASPADQELYQFTVNGTH. Residues Asn1556 and Asn1573 are each glycosylated (N-linked (GlcNAc...) asparagine). YD repeat units lie at residues 1576–1596, 1614–1638, 1639–1660, and 1661–1681; these read YNAE…VHIR, YWLT…ALMT, YPGN…TVYE, and YDPE…SSFH. Residues Asn1669, Asn1705, Asn1743, Asn1763, Asn1787, and Asn1848 are each glycosylated (N-linked (GlcNAc...) asparagine). YD repeat units lie at residues 1851–1870, 1871–1891, 1892–1910, 1911–1931, 1939–1955, 1956–1975, 1976–1995, 1998–2018, 2021–2041, 2091–2111, and 2119–2139; these read YSPS…EKME, YDQS…WSYT, YLEK…YIFE, YDQS…HSLQ, YRNI…FIQD, YSRD…RRVL, YKYT…TQVT, YEES…FICT, YRQT…EGLV, YDLN…FNAN, and YEIL…MGRM. N-linked (GlcNAc...) asparagine glycosylation is present at Asn2151. YD repeat units lie at residues 2159–2179, 2180–2200, 2202–2222, 2234–2254, and 2256–2276; these read YDAD…WRYS, YDLN…LTPL, YDLR…DEDG, YNSN…TVQY, and YDGL…LQFF. Asn2291 carries N-linked (GlcNAc...) asparagine glycosylation. 2 YD repeats span residues 2302 to 2319 and 2320 to 2343; these read YDLQ…GEEY and YVAC…IKEI. Ser2586 is modified (phosphoserine). N-linked (GlcNAc...) asparagine glycosylation is present at Asn2608.

The protein belongs to the tenascin family. Teneurin subfamily. Homodimer; disulfide-linked. Heterodimer with either TENM2 or TENM3. May also form heterodimer with TENM4. Ten-1 ICD interacts with SORBS1 (via third SH3 domain). Interacts with MBD1 isoform 2. Ten-1 ICD interacts with HINT1. Once secreted, may also be cleaved to give rise to the TCAP-1 form. Post-translationally, derives from the plasma membrane form by proteolytic processing. Further proteolytic cleavage may generate 11.9 and 4.7 kDa bioactive peptides. As to expression, isoform 1 and isoform 2 are expressed in the brain. Isoform 2 is expressed in the granular layer of the dentate gyrus and the pyramidal layer (Py) of the CA1, CA2 and CA3 of the hippocampus (at protein level). Expressed in the cortex, thalamus, CA1, CA2, CA3, dentate gyrus and granular layer of the hippocampus. Weakly expressed in kidney, testis and lung.

Its subcellular location is the cell membrane. The protein resides in the cytoplasm. The protein localises to the secreted. It localises to the nucleus. It is found in the nucleus speckle. Its subcellular location is the nucleus matrix. The protein resides in the cytoskeleton. Its function is as follows. Involved in neural development, regulating the establishment of proper connectivity within the nervous system. May function as a cellular signal transducer. Plays a role in the regulation of neuroplasticity in the limbic system. Mediates a rapid reorganization of actin- and tubulin-based cytoskeleton elements with an increase in dendritic arborization and spine density formation of neurons in the hippocampus and amygdala. Induces BDNF transcription inhibition in neurons. Activates the mitogen-activated protein (MAP) kinase 2 (MEK2) and extracellular signal-regulated kinase (ERK) cascade. Also acts as a bioactive neuroprotective peptide on limbic neurons of the brain and regulates stress-induced behavior: attenuates alkalosis-associated necrotic cell death and the effects of corticotropin-releasing factor (CRF) on c-fos/FOS induction and on the reinstatement of cocaine seeking. In terms of biological role, induces gene transcription activation. This chain is Teneurin-1 (Tenm1), found in Mus musculus (Mouse).